Reading from the N-terminus, the 162-residue chain is Cytochrome c-type biogenesis protein CcmE (162 aa).

Over 1–7 the chain is Cytoplasmic; it reads MTRKQRR. Residues 8 to 28 traverse the membrane as a helical; Signal-anchor for type II membrane protein segment; the sequence is LTMIGGALVVLGIAAALVLNA. The Periplasmic segment spans residues 29–162; the sequence is LRDSIVFFST…EASSKQEVSQ (134 aa). Heme is bound by residues H122 and Y126. A disordered region spans residues 140 to 162; it reads HWKDDYGAQPGAAEASSKQEVSQ.

This sequence belongs to the CcmE/CycJ family.

The protein localises to the cell inner membrane. Functionally, heme chaperone required for the biogenesis of c-type cytochromes. Transiently binds heme delivered by CcmC and transfers the heme to apo-cytochromes in a process facilitated by CcmF and CcmH. This chain is Cytochrome c-type biogenesis protein CcmE, found in Nitrobacter winogradskyi (strain ATCC 25391 / DSM 10237 / CIP 104748 / NCIMB 11846 / Nb-255).